A 605-amino-acid polypeptide reads, in one-letter code: Glucose oxidase (605 aa).

A signal peptide spans 1 to 18 (MVSVFLSTLLLAAATVQA). L52, T53, and E73 together coordinate FAD. N-linked (GlcNAc...) asparagine glycosylation is present at N111. The FAD site is built by S125, N129, G130, and S132. 2 N-linked (GlcNAc...) asparagine glycosylation sites follow: N183 and N190. C186 and C228 are oxidised to a cystine. FAD is bound at residue V272. Residues N335, N375, N410, and N519 are each glycosylated (N-linked (GlcNAc...) asparagine). The Proton acceptor role is filled by H538. O2 is bound by residues K559 and V560. FAD-binding residues include G571 and M583.

This sequence belongs to the GMC oxidoreductase family. Homodimer. It depends on FAD as a cofactor.

The protein resides in the secreted. Its subcellular location is the cell wall. The protein localises to the cytoplasmic vesicle. The catalysed reaction is beta-D-glucose + O2 = D-glucono-1,5-lactone + H2O2. In terms of biological role, glucose oxidase catalyzes the oxidation of beta-D-glucose to D-glucono-delta-lactone and hydrogen peroxide in the presence of molecular oxygen. D-glucono-delta-lactone is sequentially hydrolyzed by lactonase to D-gluconic acid, and the resulting hydrogen peroxide is hydrolyzed by catalase to oxygen and water. Glucose oxidase alone indirectly causes toxicity in the presence of glucose and is the active compound of the antifungal antibiotic talaron. Responsible for inhibition of germination of microsclerotia of Verticillium dahliae. In Talaromyces flavus, this protein is Glucose oxidase.